A 259-amino-acid chain; its full sequence is Tryptophan synthase alpha chain (259 aa).

Residues E35 and D46 each act as proton acceptor in the active site.

This sequence belongs to the TrpA family. As to quaternary structure, tetramer of two alpha and two beta chains.

It catalyses the reaction (1S,2R)-1-C-(indol-3-yl)glycerol 3-phosphate + L-serine = D-glyceraldehyde 3-phosphate + L-tryptophan + H2O. It functions in the pathway amino-acid biosynthesis; L-tryptophan biosynthesis; L-tryptophan from chorismate: step 5/5. Functionally, the alpha subunit is responsible for the aldol cleavage of indoleglycerol phosphate to indole and glyceraldehyde 3-phosphate. The sequence is that of Tryptophan synthase alpha chain from Methanococcus maripaludis (strain C5 / ATCC BAA-1333).